The sequence spans 424 residues: 3-phosphoshikimate 1-carboxyvinyltransferase (424 aa).

The 3-phosphoshikimate site is built by K21, S22, and R26. K21 contributes to the phosphoenolpyruvate binding site. 2 residues coordinate phosphoenolpyruvate: G92 and R120. 3-phosphoshikimate-binding residues include S163, S164, Q165, S191, D306, and K333. Q165 contacts phosphoenolpyruvate. D306 serves as the catalytic Proton acceptor. Phosphoenolpyruvate-binding residues include R337, R379, and K405.

This sequence belongs to the EPSP synthase family. Monomer.

The protein localises to the cytoplasm. The catalysed reaction is 3-phosphoshikimate + phosphoenolpyruvate = 5-O-(1-carboxyvinyl)-3-phosphoshikimate + phosphate. It functions in the pathway metabolic intermediate biosynthesis; chorismate biosynthesis; chorismate from D-erythrose 4-phosphate and phosphoenolpyruvate: step 6/7. In terms of biological role, catalyzes the transfer of the enolpyruvyl moiety of phosphoenolpyruvate (PEP) to the 5-hydroxyl of shikimate-3-phosphate (S3P) to produce enolpyruvyl shikimate-3-phosphate and inorganic phosphate. This chain is 3-phosphoshikimate 1-carboxyvinyltransferase, found in Clostridium perfringens (strain SM101 / Type A).